The sequence spans 640 residues: Calpain-5 (640 aa).

Positions 26-343 (LFEDPLFPAT…FTDIIKCRLI (318 aa)) constitute a Calpain catalytic domain. Active-site residues include C81, H252, and N284. A domain III region spans residues 344 to 496 (NTSYLSIHKT…VFTDVPSNCR (153 aa)). In terms of domain architecture, C2 spans 499 to 617 (RLDEPPRTCW…HTLHLQDRSS (119 aa)).

The protein belongs to the peptidase C2 family.

Its function is as follows. Calcium-regulated non-lysosomal thiol-protease. This Mus musculus (Mouse) protein is Calpain-5 (Capn5).